Here is a 961-residue protein sequence, read N- to C-terminus: Roundabout homolog 4 (961 aa).

The N-terminal stretch at 1 to 37 (MGQGEELRAAVDSGGMGLLGTKCPLPLLLLFIMGGKA) is a signal peptide. 2 consecutive Ig-like C2-type domains span residues 42–142 (PQIL…ARLS) and 148–235 (EDFR…ARVS). 2 disulfides stabilise this stretch: C63–C125 and C169–C218. N-linked (GlcNAc...) asparagine glycosylation is found at N211 and N257. Fibronectin type-III domains lie at 259-356 (TLLN…LPEQ) and 358-453 (PSAP…LEQA). N371, N400, and N407 each carry an N-linked (GlcNAc...) asparagine glycan. A compositionally biased stretch (low complexity) spans 544–559 (SGSRDLSSSSSLSSRL). Disordered regions lie at residues 544-563 (SGSR…GVDP) and 600-634 (QTSS…SSDS). Positions 623–634 (TGTSSPWASSDS) are enriched in polar residues. N-linked (GlcNAc...) asparagine glycans are attached at residues N691 and N723. The interval 726 to 810 (ELAARPLPPT…SLEEEDQDSV (85 aa)) is disordered. Over residues 755–769 (LQAPSSDPLPAAPLS) the composition is skewed to low complexity. Over residues 770–783 (VLNSSRPSSPQASF) the composition is skewed to polar residues. Residues N772 and N793 are each glycosylated (N-linked (GlcNAc...) asparagine). A compositionally biased stretch (low complexity) spans 784–801 (LSVPSPGSSNLSSSSLSS). S823 carries the phosphoserine modification.

This sequence belongs to the immunoglobulin superfamily. ROBO family. In terms of assembly, interacts with SLIT2 and ENAH.

Its function is as follows. Receptor for Slit proteins, at least for SLIT2, and seems to be involved in angiogenesis and vascular patterning. May mediate the inhibition of primary endothelial cell migration by Slit proteins. Involved in the maintenance of endothelial barrier organization and function. This chain is Roundabout homolog 4 (Robo4), found in Rattus norvegicus (Rat).